Consider the following 956-residue polypeptide: Glutamate receptor ionotropic, kainate 4 (956 aa).

An N-terminal signal peptide occupies residues 1 to 20 (MPRVSAPLVLLPAWLLMVAC). Residues 21–545 (SPHSLRIAAI…YFSFLDPFSP (525 aa)) are Extracellular-facing. Asparagine 158, asparagine 220, asparagine 272, asparagine 286, asparagine 323, asparagine 408, asparagine 415, and asparagine 479 each carry an N-linked (GlcNAc...) asparagine glycan. L-glutamate contacts are provided by glycine 500, threonine 502, and arginine 507. The chain crosses the membrane as a helical span at residues 546-566 (GVWLFMLLAYLAVSCVLFLVA). The Cytoplasmic segment spans residues 567–623 (RLTPYEWYSPHPCAQGRCNLLVNQYSLGNSLWFPVGGFMQQGSTIAPRALSTRCVSG). Residues 624-644 (VWWAFTLIIISSYTANLAAFL) form a helical membrane-spanning segment. The Extracellular segment spans residues 645–804 (TVQRMEVPIE…HRAKGLGMEN (160 aa)). Residues serine 674, serine 675, and glutamate 723 each contribute to the L-glutamate site. N-linked (GlcNAc...) asparagine glycosylation is present at asparagine 736. Residues 805-825 (IGGIFVVLICGLIVAIFMAML) form a helical membrane-spanning segment. Residues 826–956 (EFLWTLRHSE…DKTTNSSEPE (131 aa)) are Cytoplasmic-facing. Residues 931–956 (LRARPSPARSEESLEWDKTTNSSEPE) are disordered. The span at 939 to 948 (RSEESLEWDK) shows a compositional bias: basic and acidic residues.

It belongs to the glutamate-gated ion channel (TC 1.A.10.1) family. GRIK4 subfamily. As to quaternary structure, homodimer. Can form functional heteromeric receptors with GRIK1, GRIK2 and GRIK3 subunits. Forms a heteromeric complex with GRIK2. In terms of tissue distribution, expressed in the hippocampus and cerebellum (at protein level).

Its subcellular location is the cell membrane. It localises to the postsynaptic cell membrane. The protein localises to the presynaptic cell membrane. In terms of biological role, ionotropic glutamate receptor that functions as a cation-permeable ligand-gated ion channel. Cannot form functional channels on its own and produces channel activity only in heteromeric assembly with GRIK1, GRIK2 and GRIK3 subunits. This Mus musculus (Mouse) protein is Glutamate receptor ionotropic, kainate 4 (Grik4).